Here is a 287-residue protein sequence, read N- to C-terminus: ATP synthase gamma chain (287 aa).

It belongs to the ATPase gamma chain family. In terms of assembly, F-type ATPases have 2 components, CF(1) - the catalytic core - and CF(0) - the membrane proton channel. CF(1) has five subunits: alpha(3), beta(3), gamma(1), delta(1), epsilon(1). CF(0) has three main subunits: a, b and c.

It localises to the cell inner membrane. Functionally, produces ATP from ADP in the presence of a proton gradient across the membrane. The gamma chain is believed to be important in regulating ATPase activity and the flow of protons through the CF(0) complex. The polypeptide is ATP synthase gamma chain (Salmonella paratyphi A (strain ATCC 9150 / SARB42)).